A 921-amino-acid chain; its full sequence is Isoleucine--tRNA ligase (921 aa).

Positions 57 to 67 (PYANGDIHMGH) match the 'HIGH' region motif. An L-isoleucyl-5'-AMP-binding site is contributed by Glu552. A 'KMSKS' region motif is present at residues 593–597 (KMSKS). Lys596 contributes to the ATP binding site. 4 residues coordinate Zn(2+): Cys888, Cys891, Cys908, and Cys911.

Belongs to the class-I aminoacyl-tRNA synthetase family. IleS type 1 subfamily. As to quaternary structure, monomer. It depends on Zn(2+) as a cofactor.

The protein localises to the cytoplasm. The enzyme catalyses tRNA(Ile) + L-isoleucine + ATP = L-isoleucyl-tRNA(Ile) + AMP + diphosphate. Functionally, catalyzes the attachment of isoleucine to tRNA(Ile). As IleRS can inadvertently accommodate and process structurally similar amino acids such as valine, to avoid such errors it has two additional distinct tRNA(Ile)-dependent editing activities. One activity is designated as 'pretransfer' editing and involves the hydrolysis of activated Val-AMP. The other activity is designated 'posttransfer' editing and involves deacylation of mischarged Val-tRNA(Ile). In Bacillus anthracis (strain A0248), this protein is Isoleucine--tRNA ligase.